We begin with the raw amino-acid sequence, 504 residues long: D-alanine--D-alanyl carrier protein ligase (504 aa).

152-153 (TS) provides a ligand contact to ATP. Asp-197 serves as a coordination point for D-alanine. 292–297 (NTYGPT) is an ATP binding site. A D-alanine-binding site is contributed by Val-301. ATP-binding positions include Asp-383, 394–397 (YNGR), and Lys-492. A D-alanine-binding site is contributed by Lys-492.

This sequence belongs to the ATP-dependent AMP-binding enzyme family. DltA subfamily.

It is found in the cytoplasm. The enzyme catalyses holo-[D-alanyl-carrier protein] + D-alanine + ATP = D-alanyl-[D-alanyl-carrier protein] + AMP + diphosphate. Its pathway is cell wall biogenesis; lipoteichoic acid biosynthesis. Functionally, catalyzes the first step in the D-alanylation of lipoteichoic acid (LTA), the activation of D-alanine and its transfer onto the D-alanyl carrier protein (Dcp) DltC. In an ATP-dependent two-step reaction, forms a high energy D-alanyl-AMP intermediate, followed by transfer of the D-alanyl residue as a thiol ester to the phosphopantheinyl prosthetic group of the Dcp. D-alanylation of LTA plays an important role in modulating the properties of the cell wall in Gram-positive bacteria, influencing the net charge of the cell wall. This is D-alanine--D-alanyl carrier protein ligase from Bacillus cereus (strain B4264).